We begin with the raw amino-acid sequence, 725 residues long: Methionine--tRNA ligase (725 aa).

The 'HIGH' region signature appears at 27-37 (PYANGQIHIGH). Residues Cys158, Cys161, Cys171, and Cys174 each coordinate Zn(2+). The 'KMSKS' region motif lies at 348–352 (KMSKS). Residue Lys351 coordinates ATP. The tRNA-binding domain maps to 619–725 (DFAKIDLRIA…SGAKPGMRVK (107 aa)).

The protein belongs to the class-I aminoacyl-tRNA synthetase family. MetG type 1 subfamily. Homodimer. Zn(2+) serves as cofactor.

Its subcellular location is the cytoplasm. It catalyses the reaction tRNA(Met) + L-methionine + ATP = L-methionyl-tRNA(Met) + AMP + diphosphate. In terms of biological role, is required not only for elongation of protein synthesis but also for the initiation of all mRNA translation through initiator tRNA(fMet) aminoacylation. This Burkholderia pseudomallei (strain 668) protein is Methionine--tRNA ligase.